The primary structure comprises 2422 residues: Interferon-induced very large GTPase 1 (2422 aa).

Residues E945–H965 are disordered. The segment covering P954 to S963 has biased composition (low complexity). A VLIG-type G domain is found at D1479 to Q1720. GTP is bound by residues G1489–S1496, D1542–G1545, and T1619–D1622.

This sequence belongs to the TRAFAC class dynamin-like GTPase superfamily. Very large inducible GTPase (VLIG) family.

The protein localises to the cytoplasm. It is found in the cytosol. It localises to the nucleus. In Homo sapiens (Human), this protein is Interferon-induced very large GTPase 1 (GVINP1).